The primary structure comprises 108 residues: Small ribosomal subunit protein uS10 (108 aa).

The protein belongs to the universal ribosomal protein uS10 family. As to quaternary structure, part of the 30S ribosomal subunit.

Functionally, involved in the binding of tRNA to the ribosomes. This chain is Small ribosomal subunit protein uS10, found in Rhodopirellula baltica (strain DSM 10527 / NCIMB 13988 / SH1).